A 297-amino-acid polypeptide reads, in one-letter code: Alarmin release inhibitor (297 aa).

3 N-linked (GlcNAc...) asparagine glycosylation sites follow: N107, N175, and N190. A Sushi domain is found at 151-211 (TYDPTPNTPT…WVPTLGVCPK (61 aa)). An intrachain disulfide couples C183 to C209.

Interacts with mouse IL33 (in reduced form).

It localises to the secreted. The protein localises to the host nucleus. In terms of biological role, secreted protein which suppresses the host allergic response by inhibiting the interaction of host IL33 with its receptor in order to maintain parasitic infection. Binds to both host IL33 and host nuclear DNA and this dual binding blocks the interaction of IL33 with its receptor, and tethers IL33 within necrotic cells, preventing its release, and blocking allergic response initiation. In Heligmosomoides polygyrus (Parasitic roundworm), this protein is Alarmin release inhibitor.